A 249-amino-acid chain; its full sequence is Polyhedrin (249 aa).

It belongs to the polyhedrin family.

Its function is as follows. Major component of the virus occlusion bodies, which are large proteinaceous structures (polyhedra), that protect the virus from the outside environment for extended periods until they are ingested by insect larvae. This Lepidoptera (butterflies and moths) protein is Polyhedrin (PH).